The chain runs to 151 residues: Large ribosomal subunit protein bL9 (151 aa).

It belongs to the bacterial ribosomal protein bL9 family.

Functionally, binds to the 23S rRNA. The sequence is that of Large ribosomal subunit protein bL9 from Francisella tularensis subsp. tularensis (strain FSC 198).